The following is a 1398-amino-acid chain: MAP-homologous protein 1 (1398 aa).

M1 is modified (N-acetylmethionine). A disordered region spans residues 21 to 77 (GWLVRPSASTSKSSRPGKSESKANSVAPDIQMDTARPPVFETSVDSSSSILSSNDKG). Positions 27–36 (SASTSKSSRP) are enriched in polar residues. Residues 63 to 73 (SVDSSSSILSS) show a composition bias toward low complexity. S81 bears the Phosphoserine mark. 3 disordered regions span residues 90 to 144 (NQRA…APAP), 156 to 186 (HRKK…GAAI), and 191 to 210 (TATI…PPSY). Composition is skewed to polar residues over residues 91–102 (QRANAGSTSVPT) and 114–123 (VVETNLSNVE). Residues 159–186 (KDQEQQEKERERKERSPSPTHVDRGAAI) show a composition bias toward basic and acidic residues. K221 participates in a covalent cross-link: Glycyl lysine isopeptide (Lys-Gly) (interchain with G-Cter in ubiquitin). At T222 the chain carries Phosphothreonine. Disordered stretches follow at residues 244-270 (HSPE…PDPR), 296-382 (SSAS…PSSH), 395-428 (GNNN…SSME), and 515-548 (NPEE…NNSQ). Phosphoserine is present on residues S309, S311, S354, and S357. Residues 357–371 (SIVDTVDSNSDVSSS) show a composition bias toward low complexity. Residues 372-381 (AQNNNQTPSS) are compositionally biased toward polar residues. A compositionally biased stretch (low complexity) spans 396–426 (NNNNNSTNASSLSANVNNPDTSSTSLWSSSS). Over residues 521 to 538 (ANAKSKEEMAPQKQNEVE) the composition is skewed to basic and acidic residues. T577 is subject to Phosphothreonine. Residues 605 to 615 (STSSLASMVSS) are compositionally biased toward low complexity. Disordered stretches follow at residues 605–630 (STSS…EILP), 1148–1169 (LKSP…PNSE), and 1203–1223 (DAED…HEDV). Residues 1160-1169 (GGNQAQPNSE) are compositionally biased toward polar residues. Residues 1208 to 1223 (VEFREGDDSNVNHEDV) show a composition bias toward basic and acidic residues. The segment at 1227–1258 (DQQFRDEVDIKNKYSIIKRELEHEKLVGGGDL) is tau/MAP repeat-like. Residues 1313–1372 (QEETAFRTKDEQQSSQSNDSSANASPTTDPISTGSNTSRTNDNAHIPPTDAPGFDKFMNN) form a disordered region. Low complexity predominate over residues 1325–1337 (QSSQSNDSSANAS). The segment covering 1338 to 1355 (PTTDPISTGSNTSRTNDN) has biased composition (polar residues).

Its subcellular location is the cytoplasm. The protein localises to the cytoskeleton. The protein resides in the spindle. Functionally, essential for the formation and/or stabilization of microtubules. Binds to microtubules in vitro. The polypeptide is MAP-homologous protein 1 (MHP1) (Saccharomyces cerevisiae (strain ATCC 204508 / S288c) (Baker's yeast)).